Reading from the N-terminus, the 104-residue chain is Increased recombination centers protein 13 (104 aa).

The chain crosses the membrane as a helical span at residues 63–83 (LVHLFSYVFFLFLLKICVDVL).

The protein resides in the membrane. In terms of biological role, may be involved in a pathway contributing to genomic integrity. The polypeptide is Increased recombination centers protein 13 (IRC13) (Saccharomyces cerevisiae (strain ATCC 204508 / S288c) (Baker's yeast)).